Here is an 813-residue protein sequence, read N- to C-terminus: Phosphoribosylformylglycinamidine synthase subunit PurL (813 aa).

Residue H56 is part of the active site. ATP-binding residues include Y59 and K103. E105 is a binding site for Mg(2+). Substrate contacts are provided by residues 106-109 (SHNH) and R128. The active-site Proton acceptor is H107. D129 contacts Mg(2+). A substrate-binding site is contributed by Q253. Position 281 (D281) interacts with Mg(2+). Residue 325–327 (ESQ) participates in substrate binding. 2 residues coordinate ATP: N511 and G548. Residue N549 coordinates Mg(2+). Residue S551 participates in substrate binding.

The protein belongs to the FGAMS family. As to quaternary structure, monomer. Part of the FGAM synthase complex composed of 1 PurL, 1 PurQ and 2 PurS subunits.

Its subcellular location is the cytoplasm. The enzyme catalyses N(2)-formyl-N(1)-(5-phospho-beta-D-ribosyl)glycinamide + L-glutamine + ATP + H2O = 2-formamido-N(1)-(5-O-phospho-beta-D-ribosyl)acetamidine + L-glutamate + ADP + phosphate + H(+). Its pathway is purine metabolism; IMP biosynthesis via de novo pathway; 5-amino-1-(5-phospho-D-ribosyl)imidazole from N(2)-formyl-N(1)-(5-phospho-D-ribosyl)glycinamide: step 1/2. Part of the phosphoribosylformylglycinamidine synthase complex involved in the purines biosynthetic pathway. Catalyzes the ATP-dependent conversion of formylglycinamide ribonucleotide (FGAR) and glutamine to yield formylglycinamidine ribonucleotide (FGAM) and glutamate. The FGAM synthase complex is composed of three subunits. PurQ produces an ammonia molecule by converting glutamine to glutamate. PurL transfers the ammonia molecule to FGAR to form FGAM in an ATP-dependent manner. PurS interacts with PurQ and PurL and is thought to assist in the transfer of the ammonia molecule from PurQ to PurL. This is Phosphoribosylformylglycinamidine synthase subunit PurL from Corynebacterium jeikeium (strain K411).